The following is a 117-amino-acid chain: Large ribosomal subunit protein bL20 (117 aa).

The protein belongs to the bacterial ribosomal protein bL20 family.

Its function is as follows. Binds directly to 23S ribosomal RNA and is necessary for the in vitro assembly process of the 50S ribosomal subunit. It is not involved in the protein synthesizing functions of that subunit. This Histophilus somni (strain 129Pt) (Haemophilus somnus) protein is Large ribosomal subunit protein bL20.